Consider the following 253-residue polypeptide: Ubiquinone/menaquinone biosynthesis C-methyltransferase UbiE (253 aa).

S-adenosyl-L-methionine contacts are provided by residues T76, D97, 125–126 (NA), and S142.

Belongs to the class I-like SAM-binding methyltransferase superfamily. MenG/UbiE family.

The catalysed reaction is a 2-demethylmenaquinol + S-adenosyl-L-methionine = a menaquinol + S-adenosyl-L-homocysteine + H(+). It carries out the reaction a 2-methoxy-6-(all-trans-polyprenyl)benzene-1,4-diol + S-adenosyl-L-methionine = a 5-methoxy-2-methyl-3-(all-trans-polyprenyl)benzene-1,4-diol + S-adenosyl-L-homocysteine + H(+). The protein operates within quinol/quinone metabolism; menaquinone biosynthesis; menaquinol from 1,4-dihydroxy-2-naphthoate: step 2/2. Its pathway is cofactor biosynthesis; ubiquinone biosynthesis. Methyltransferase required for the conversion of demethylmenaquinol (DMKH2) to menaquinol (MKH2) and the conversion of 2-polyprenyl-6-methoxy-1,4-benzoquinol (DDMQH2) to 2-polyprenyl-3-methyl-6-methoxy-1,4-benzoquinol (DMQH2). This Xanthomonas campestris pv. campestris (strain ATCC 33913 / DSM 3586 / NCPPB 528 / LMG 568 / P 25) protein is Ubiquinone/menaquinone biosynthesis C-methyltransferase UbiE.